A 303-amino-acid polypeptide reads, in one-letter code: D-alanine--D-alanine ligase (303 aa).

The ATP-grasp domain maps to 99–293; sequence TYRFLKGTVE…FEELVEIILK (195 aa). ATP is bound at residue 125–176; the sequence is GYPCVVKPRREGSSIGVFVCESDEEFQHALKEDLPRYGSVIVQKYIPGREMT. Positions 248, 260, and 262 each coordinate Mg(2+).

Belongs to the D-alanine--D-alanine ligase family. It depends on Mg(2+) as a cofactor. Mn(2+) serves as cofactor.

It localises to the cytoplasm. It carries out the reaction 2 D-alanine + ATP = D-alanyl-D-alanine + ADP + phosphate + H(+). It functions in the pathway cell wall biogenesis; peptidoglycan biosynthesis. Cell wall formation. The polypeptide is D-alanine--D-alanine ligase (Thermotoga maritima (strain ATCC 43589 / DSM 3109 / JCM 10099 / NBRC 100826 / MSB8)).